The following is a 138-amino-acid chain: Protein NrdI (138 aa).

This sequence belongs to the NrdI family.

Its function is as follows. Probably involved in ribonucleotide reductase function. The chain is Protein NrdI from Mycobacterium leprae (strain TN).